The sequence spans 182 residues: Lipoprotein signal peptidase (182 aa).

3 consecutive transmembrane segments (helical) span residues 12–32, 68–88, and 91–111; these read VAVF…TKAW, ATWV…VAGV, and ISMK…GNLI. Active-site residues include Asp-127 and Asp-140. A helical transmembrane segment spans residues 135–155; that stretch reads VGNVADIYLVVAGVVLVILIL.

The protein belongs to the peptidase A8 family.

It is found in the cell membrane. The catalysed reaction is Release of signal peptides from bacterial membrane prolipoproteins. Hydrolyzes -Xaa-Yaa-Zaa-|-(S,diacylglyceryl)Cys-, in which Xaa is hydrophobic (preferably Leu), and Yaa (Ala or Ser) and Zaa (Gly or Ala) have small, neutral side chains.. Its pathway is protein modification; lipoprotein biosynthesis (signal peptide cleavage). In terms of biological role, this protein specifically catalyzes the removal of signal peptides from prolipoproteins. This chain is Lipoprotein signal peptidase, found in Bifidobacterium longum subsp. infantis (strain ATCC 15697 / DSM 20088 / JCM 1222 / NCTC 11817 / S12).